The following is a 447-amino-acid chain: NADP-specific glutamate dehydrogenase (447 aa).

Lys92, Gln113, and Lys116 together coordinate substrate. Lys128 acts as the Proton donor in catalysis. Residue Gly167 participates in substrate binding. Positions 211 and 242 each coordinate NADP(+). A substrate-binding site is contributed by Ser380.

The protein belongs to the Glu/Leu/Phe/Val dehydrogenases family. Homohexamer.

The catalysed reaction is L-glutamate + NADP(+) + H2O = 2-oxoglutarate + NH4(+) + NADPH + H(+). Functionally, catalyzes the reversible oxidative deamination of glutamate to alpha-ketoglutarate and ammonia. The polypeptide is NADP-specific glutamate dehydrogenase (gdhA) (Salmonella typhimurium (strain LT2 / SGSC1412 / ATCC 700720)).